Here is a 192-residue protein sequence, read N- to C-terminus: RNA-free ribonuclease P (192 aa).

The protein belongs to the HARP family.

It catalyses the reaction Endonucleolytic cleavage of RNA, removing 5'-extranucleotides from tRNA precursor.. RNA-free RNase P that catalyzes the removal of the 5'-leader sequence from pre-tRNA to produce the mature 5'-terminus. The polypeptide is RNA-free ribonuclease P (Alkalilimnicola ehrlichii (strain ATCC BAA-1101 / DSM 17681 / MLHE-1)).